The following is a 708-amino-acid chain: F-box protein MAX2 homolog A (708 aa).

The F-box domain maps to 2-49 (ATQLNDLPDVILSNIIAAVTDVRSRNSTSFVCRKWLVLERSTRVSLTL).

As to quaternary structure, part of a putative SCF (SKP1/Cullin/F-box) ubiquitin ligase complex. Interacts with DAD2. Interacts with KAI2IA in the presence of (-)-germacrene D. In terms of tissue distribution, mainly expressed in fully expanded leaves, lateral roots, axillary and shoot apex, and, to a lower extent, in internodes and nodes.

It is found in the nucleus. Component of SCF(ASK-cullin-F-box) E3 ubiquitin ligase complexes, which may mediate the ubiquitination and subsequent proteasomal degradation of target proteins. Is necessary for responses to strigolactones and may be involved in the ubiquitin-mediated degradation of specific proteins that activate axillary growth. Targets probably SMAX1A to degradation upon the formation of an E3 SCF ubiquitin ligase complex (ASK-cullin-F-box) containing MAX2A and KAI2IA in response to (-)-germacrene D in the stigma. The protein is F-box protein MAX2 homolog A of Petunia hybrida (Petunia).